Here is a 366-residue protein sequence, read N- to C-terminus: MESIIARPRTRSSAKEKTQTMSAKKISANGNNIAVQAKSKRNTPLGVIKLARLHTLESLLCVYPAIWGACLSAGSHQKVFTPSSFLSVLFANWISMTIAHMAFCTFNDIVDRNFDGKVERTKVRPLPAGMISLRSAIIAFIVEMGLTVYISYATLGFDGALVCAPVWIASTIYPFMKRVVQWPQLVLGPIIGMAVFPGWVSVAGNLDTLRDAVPMFLATSAWVVYFDTIYATQDTNDDKKIGVKSLAVLFHNHMHQFLGFLGSIQIALLSFTARKANMSALFWSLGVCVWGLNIPFHLLSLDTKNPKTGGKVFLMNILLGLWITIVCVIELWTTTVMHLDVNDFLLKTVVHNITLTAQNIRSSVAF.

Residues methionine 1–serine 22 form a disordered region. The next 7 membrane-spanning stretches (helical) occupy residues leucine 53 to alanine 73, phenylalanine 85 to threonine 105, isoleucine 137 to phenylalanine 157, alanine 160 to valine 180, leucine 185 to asparagine 205, alanine 212 to threonine 232, and histidine 253 to alanine 273. N-linked (GlcNAc...) asparagine glycosylation occurs at asparagine 277. A run of 2 helical transmembrane segments spans residues leucine 281 to leucine 301 and valine 312 to tryptophan 332. Asparagine 352 is a glycosylation site (N-linked (GlcNAc...) asparagine).

It belongs to the UbiA prenyltransferase family. Mg(2+) is required as a cofactor.

It is found in the membrane. The protein operates within secondary metabolite biosynthesis; terpenoid biosynthesis. In terms of biological role, polyprenyl transferase; part of the gene cluster that mediates the biosynthesis of sesquiterpenyl epoxy-cyclohexenoids (SECs) such as anthrobotrisins and arthrosporols, metabolites that possess a novel hybrid carbon skeleton consisting of a polyketide-derived epoxycyclohexenol combined with a terpenoid-derived monocyclic sesquiterpenol substructure (PKS-PTS hybrid). The SEC pathway plays an important role for fungal soil colonization via decreasing fungal nematode-capturing ability. Within the pathway, the polyprenyl transferase catalyzes the farnesylation of toluquinol to yield farnesyl hydroquinone, the first hybrid precursor for biosynthesis of SECs, and farnesyl quinone (34) might be the key precursor for the epoxy ring formation. The pathway begins with the biosynthesis of 6-methylsalicylic acid (6-MSA), the first precursor of the polyketide-derived epoxycyclohexenol in arthrosporols, by the polyketide synthase (PKS) AOL_s00215g283 via condensation of 1 acetate and 3 malonate units. The 6-methylsalicylic acid decarboxylase AOL_s00215g281 then catalyzes the decarboxylation of 6-methylsalicylic acid to yield m-cresol. The cytochrome P450 monooxygenase AOL_s00215g282 further oxidizes m-cresol to yield toluquinol. With the assistance of the oxidoreductase AOL_s00215g277, the polyprenyl transferase AOL_s00215g276 catalyzes the farnesylation of toluquinol to produce farnesyl hydroquinone, the hybrid precursor for biosynthesis of SECs. Farnesyl hydroquinone undergoes epoxidation and then subsequent dehydrogenation to form farnesyl epoxy-quinone, the first and simplest SEC. The cytochrome P450 monooxygenase AOL_s00215g278 and the FAD-dependent monooxygenase AOL_s00215g279 might be involved in the oxygenation of the phenol moiety, most likely in the epoxy formation. The cytochrome P450 monooxygenases AOL_s00215g274 and AOL_s00215g280 are involved in specific regional ketone reductions at respectively C-4 and C-1 of farnesyl epoxy-quinone PubMed:33823587. This chain is Polyprenyl transferase AOL_s00215g276, found in Arthrobotrys oligospora (strain ATCC 24927 / CBS 115.81 / DSM 1491) (Nematode-trapping fungus).